A 221-amino-acid polypeptide reads, in one-letter code: Ribosomal RNA small subunit methyltransferase G (221 aa).

Residues Gly-78, Phe-83, and Arg-150 each contribute to the S-adenosyl-L-methionine site.

Belongs to the methyltransferase superfamily. RNA methyltransferase RsmG family.

It is found in the cytoplasm. Specifically methylates the N7 position of a guanine in 16S rRNA. This is Ribosomal RNA small subunit methyltransferase G from Bifidobacterium longum (strain DJO10A).